Here is a 217-residue protein sequence, read N- to C-terminus: ATP-dependent Clp protease proteolytic subunit 1 (217 aa).

Residues 1 to 24 (MTPLTTGWHPALSPRAEEGDTPPS) form a disordered region. Residue Ser108 is the Nucleophile of the active site. His133 is an active-site residue.

It belongs to the peptidase S14 family. Fourteen ClpP subunits assemble into 2 heptameric rings which stack back to back to give a disk-like structure with a central cavity, resembling the structure of eukaryotic proteasomes.

Its subcellular location is the cytoplasm. The enzyme catalyses Hydrolysis of proteins to small peptides in the presence of ATP and magnesium. alpha-casein is the usual test substrate. In the absence of ATP, only oligopeptides shorter than five residues are hydrolyzed (such as succinyl-Leu-Tyr-|-NHMec, and Leu-Tyr-Leu-|-Tyr-Trp, in which cleavage of the -Tyr-|-Leu- and -Tyr-|-Trp bonds also occurs).. Functionally, cleaves peptides in various proteins in a process that requires ATP hydrolysis. Has a chymotrypsin-like activity. Plays a major role in the degradation of misfolded proteins. The protein is ATP-dependent Clp protease proteolytic subunit 1 of Streptomyces avermitilis (strain ATCC 31267 / DSM 46492 / JCM 5070 / NBRC 14893 / NCIMB 12804 / NRRL 8165 / MA-4680).